A 98-amino-acid polypeptide reads, in one-letter code: Small ribosomal subunit protein bS6 (98 aa).

The protein belongs to the bacterial ribosomal protein bS6 family.

In terms of biological role, binds together with bS18 to 16S ribosomal RNA. This chain is Small ribosomal subunit protein bS6, found in Moorella thermoacetica (strain ATCC 39073 / JCM 9320).